A 238-amino-acid chain; its full sequence is DNA repair protein RecO (238 aa).

It belongs to the RecO family.

Its function is as follows. Involved in DNA repair and RecF pathway recombination. The chain is DNA repair protein RecO from Anaplasma marginale (strain Florida).